Consider the following 240-residue polypeptide: 1-(5-phosphoribosyl)-5-[(5-phosphoribosylamino)methylideneamino] imidazole-4-carboxamide isomerase (240 aa).

Aspartate 8 serves as the catalytic Proton acceptor. The active-site Proton donor is aspartate 130.

This sequence belongs to the HisA/HisF family.

Its subcellular location is the cytoplasm. The enzyme catalyses 1-(5-phospho-beta-D-ribosyl)-5-[(5-phospho-beta-D-ribosylamino)methylideneamino]imidazole-4-carboxamide = 5-[(5-phospho-1-deoxy-D-ribulos-1-ylimino)methylamino]-1-(5-phospho-beta-D-ribosyl)imidazole-4-carboxamide. It functions in the pathway amino-acid biosynthesis; L-histidine biosynthesis; L-histidine from 5-phospho-alpha-D-ribose 1-diphosphate: step 4/9. The sequence is that of 1-(5-phosphoribosyl)-5-[(5-phosphoribosylamino)methylideneamino] imidazole-4-carboxamide isomerase from Elusimicrobium minutum (strain Pei191).